The chain runs to 491 residues: MALLLSYPRRHPSIHLLILSAYALFLLPILDGLELGGDGLYREILRDETVLRLKELGKISDGEGYLERTFLSPASIRASAVIISWMKDAGLTTWIDQMGNIHGRFEPTNSTKEALLIGSHMDTVIDAGMYDGALGIISAISALKVLKVTGRLQRLTRPVEVIAFSDEEGVRFQTTFLGSAAVAGTLPESILQVSDKSGTTVQDVLKLNSLEGTANALGEVRYSPESVGSYVEVHIEQGPVLEALRYPLGVVKGIAGQTRLKVIINGSQGHAGTVPMKLRRDPMVAAAELVLTLETLCKEPNKFLTYDEECGCFTEESLAGLVCTVGELLTWPSASNVIPGQVNFTVDIRAMDDKVRETIVTSFSRLVLQRCDDRLVDCAVEQKHAAAATPCDAELTSRLERATRSTISSMAAGVRRAGGETPVLMSGAGHDAMAMARLTKVGMLFVRCRGGVSHSPEESVMDDDVWAAGLALVNFIDQNAVDAAAATAAES.

Positions 1–32 (MALLLSYPRRHPSIHLLILSAYALFLLPILDG) are cleaved as a signal peptide. Asn109 is a glycosylation site (N-linked (GlcNAc...) asparagine). Mn(2+) contacts are provided by His120, Asp131, Glu168, and His234. N-linked (GlcNAc...) asparagine glycosylation is found at Asn265 and Asn343. His454 lines the Mn(2+) pocket.

Belongs to the peptidase M20A family. As to quaternary structure, homodimer. Requires Mn(2+) as cofactor.

The protein resides in the endoplasmic reticulum. The catalysed reaction is allantoate + H2O + 2 H(+) = (S)-2-ureidoglycine + NH4(+) + CO2. In terms of biological role, involved in the catabolism of purine nucleotides. The sequential activity of AAH, UGLYAH and UAH allows a complete purine breakdown without the intermediate generation of urea. This is Probable allantoate deiminase from Oryza sativa subsp. japonica (Rice).